The primary structure comprises 346 residues: uncharacterized protein (346 aa).

Residues 16–36 (ILGIIICIILIVGFFISFDST) form a helical membrane-spanning segment.

It localises to the membrane. This is an uncharacterized protein from Methanocaldococcus jannaschii (strain ATCC 43067 / DSM 2661 / JAL-1 / JCM 10045 / NBRC 100440) (Methanococcus jannaschii).